The following is a 382-amino-acid chain: Mating-type protein a-1 (382 aa).

Residues I116 to R184 constitute a DNA-binding region (HMG box).

Binds in vitro to DNA containing a specific core sequence 5'-CTTTG-3'.

The protein localises to the nucleus. In terms of biological role, mating type proteins are sequence specific DNA-binding proteins that act as master switches in yeast differentiation by controlling gene expression in a cell type-specific fashion. Transcriptional activator that induces the transcription of a-specific genes like mating factor mfa-1. Required for mating as an a-cell, blocking of heterokaryon formation (vegetative incompatibility) and for perithecium induction. In Neurospora crassa, this protein is Mating-type protein a-1 (mta-1).